The following is a 91-amino-acid chain: Small ribosomal subunit protein bS16 (91 aa).

The protein belongs to the bacterial ribosomal protein bS16 family.

This Limosilactobacillus reuteri (strain DSM 20016) (Lactobacillus reuteri) protein is Small ribosomal subunit protein bS16.